The primary structure comprises 499 residues: Cobyric acid synthase (499 aa).

In terms of domain architecture, GATase cobBQ-type spans 266 to 449 (RLEIAVVRLP…LHGLFDNHLW (184 aa)). The active-site Nucleophile is C344. H441 is an active-site residue.

The protein belongs to the CobB/CobQ family. CobQ subfamily.

The protein operates within cofactor biosynthesis; adenosylcobalamin biosynthesis. In terms of biological role, catalyzes amidations at positions B, D, E, and G on adenosylcobyrinic A,C-diamide. NH(2) groups are provided by glutamine, and one molecule of ATP is hydrogenolyzed for each amidation. The polypeptide is Cobyric acid synthase (Synechococcus sp. (strain JA-2-3B'a(2-13)) (Cyanobacteria bacterium Yellowstone B-Prime)).